We begin with the raw amino-acid sequence, 761 residues long: 5-methyltetrahydropteroyltriglutamate--homocysteine methyltransferase (761 aa).

Residues 16 to 19 (RELK) and Lys-118 contribute to the 5-methyltetrahydropteroyltri-L-glutamate site. L-homocysteine contacts are provided by residues 436-438 (IGS) and Glu-489. L-methionine-binding positions include 436–438 (IGS) and Glu-489. 5-methyltetrahydropteroyltri-L-glutamate-binding positions include 520 to 521 (RC) and Trp-566. Asp-604 is a binding site for L-homocysteine. Asp-604 is an L-methionine binding site. 5-methyltetrahydropteroyltri-L-glutamate is bound at residue Glu-610. Residues His-646, Cys-648, and Glu-670 each contribute to the Zn(2+) site. His-699 functions as the Proton donor in the catalytic mechanism. Position 731 (Cys-731) interacts with Zn(2+).

This sequence belongs to the vitamin-B12 independent methionine synthase family. Zn(2+) serves as cofactor.

It carries out the reaction 5-methyltetrahydropteroyltri-L-glutamate + L-homocysteine = tetrahydropteroyltri-L-glutamate + L-methionine. The protein operates within amino-acid biosynthesis; L-methionine biosynthesis via de novo pathway; L-methionine from L-homocysteine (MetE route): step 1/1. Its function is as follows. Catalyzes the transfer of a methyl group from 5-methyltetrahydrofolate to homocysteine resulting in methionine formation. The sequence is that of 5-methyltetrahydropteroyltriglutamate--homocysteine methyltransferase from Vibrio cholerae serotype O1 (strain ATCC 39315 / El Tor Inaba N16961).